Reading from the N-terminus, the 150-residue chain is Snaclec CTL-Eoc125 (150 aa).

An N-terminal signal peptide occupies residues 1 to 23; sequence MGRFISVSFGLLVVFLSLSGIGA. 3 cysteine pairs are disulfide-bonded: Cys-27-Cys-38, Cys-55-Cys-144, and Cys-121-Cys-136. Residues 34 to 145 form the C-type lectin domain; it reads YEGHCYKVFS…CSSTQQFICK (112 aa).

Belongs to the snaclec family. In terms of assembly, heterodimer; disulfide-linked. As to expression, expressed by the venom gland.

The protein resides in the secreted. In terms of biological role, interferes with one step of hemostasis (modulation of platelet aggregation, or coagulation cascade, for example). This chain is Snaclec CTL-Eoc125, found in Echis ocellatus (Ocellated saw-scaled viper).